A 197-amino-acid chain; its full sequence is TM2 domain-containing protein 1 (197 aa).

The signal sequence occupies residues 1-32; the sequence is MAFRWRSLMRFRSTTRLLLLFTFCLTVIHSLG. Residues 33-105 lie on the Extracellular side of the membrane; sequence NDVDSCDKLH…GFNKTIPCRN (73 aa). N-linked (GlcNAc...) asparagine glycosylation is found at Asn77, Asn84, Asn98, and Asn105. A helical membrane pass occupies residues 106 to 126; that stretch reads VSGYSYKVAVALSLFLGWIGA. Residues 108–155 form the TM2 domain; that stretch reads GYSYKVAVALSLFLGWIGADRFYLGYPALGLLKFCTVGFCGIGSLVDF. Residues 127 to 143 are Cytoplasmic-facing; it reads DRFYLGYPALGLLKFCT. A helical transmembrane segment spans residues 144–164; sequence VGFCGIGSLVDFMLISMQIVG. Topologically, residues 165 to 197 are extracellular; that stretch reads PSDGSDYIVDYYGARLTRLSITNETYRRMQPSP. The N-linked (GlcNAc...) asparagine glycan is linked to Asn187.

Belongs to the TM2 family.

The protein resides in the membrane. The protein is TM2 domain-containing protein 1 (tm2d1) of Danio rerio (Zebrafish).